The primary structure comprises 212 residues: ER lumen protein-retaining receptor 2 (212 aa).

The Lumenal portion of the chain corresponds to 1 to 4 (MNIF). The chain crosses the membrane as a helical span at residues 5–24 (RLTGDLSHLAAIVILLLKIW). The Cytoplasmic segment spans residues 25–32 (KTRSCAGI). The chain crosses the membrane as a helical span at residues 33–52 (SGKSQLLFALVFTTRYLDLF). The interaction with the K-D-E-L motif on target proteins stretch occupies residues 47 to 48 (RY). Topologically, residues 53–58 (TSFISL) are lumenal. The helical transmembrane segment at 59–79 (YNTSMKLIYIACSYATVYLIY) threads the bilayer. The Cytoplasmic portion of the chain corresponds to 80-92 (MKFKATYDGNHDT). A helical transmembrane segment spans residues 93–110 (FRVEFLVVPVGGLSFLVN). Topologically, residues 111–116 (HDFSPL) are lumenal. Residues 117–135 (EILWTFSIYLESVAILPQL) traverse the membrane as a helical segment. Over 136-149 (FMISKTGEAETITT) the chain is Cytoplasmic. The helical transmembrane segment at 150–168 (HYLFFLGLYRALYLVNWIW) threads the bilayer. The interval 159–169 (RALYLVNWIWR) is interaction with the K-D-E-L motif on target proteins. Residues 169–178 (RFYFEGFFDL) are Lumenal-facing. Residues 179-199 (IAVVAGVVQTILYCDFFYLYI) form a helical membrane-spanning segment. The Cytoplasmic segment spans residues 200–212 (TKVLKGKKLSLPA). The segment at 204 to 207 (KGKK) is important for recycling of cargo proteins with the sequence motif K-D-E-L from the Golgi to the endoplasmic reticulum.

This sequence belongs to the ERD2 family.

The protein resides in the endoplasmic reticulum membrane. It localises to the golgi apparatus membrane. Its subcellular location is the cytoplasmic vesicle. It is found in the COPI-coated vesicle membrane. In terms of biological role, membrane receptor that binds the K-D-E-L sequence motif in the C-terminal part of endoplasmic reticulum resident proteins and maintains their localization in that compartment by participating to their vesicle-mediated recycling back from the Golgi. Binding is pH dependent, and is optimal at pH 5-5.4. This Mus musculus (Mouse) protein is ER lumen protein-retaining receptor 2 (Kdelr2).